Reading from the N-terminus, the 266-residue chain is Beta-lactamase OXA-11 (266 aa).

Positions 1 to 20 (MKTFAAYVIIACLSSTALAG) are cleaved as a signal peptide. The active-site Acyl-ester intermediate is serine 67. At lysine 70 the chain carries N6-carboxylysine. 205–207 (KTG) lines the substrate pocket.

It belongs to the class-D beta-lactamase family.

It carries out the reaction a beta-lactam + H2O = a substituted beta-amino acid. In terms of biological role, hydrolyzes carbenicillin, oxacillin and cephalosporin. Does not hydrolyze cefoxitin or carbapenems. The polypeptide is Beta-lactamase OXA-11 (bla) (Pseudomonas aeruginosa).